The sequence spans 164 residues: Cytochrome c-type biogenesis protein CcmE (164 aa).

The Cytoplasmic segment spans residues 1–8 (MNPRRKSR). Residues 9 to 29 (LYLAIVVLIGVALTATLMLYA) traverse the membrane as a helical; Signal-anchor for type II membrane protein segment. Topologically, residues 30–164 (LRSNIDLFYT…ATPQNEGAKS (135 aa)) are periplasmic. Heme-binding residues include histidine 130 and tyrosine 134. The span at 131–148 (DEKYTPPEVADAMKENHK) shows a compositional bias: basic and acidic residues. Residues 131-164 (DEKYTPPEVADAMKENHKGPASAYATPQNEGAKS) form a disordered region. Residues 155–164 (ATPQNEGAKS) show a composition bias toward polar residues.

The protein belongs to the CcmE/CycJ family.

The protein resides in the cell inner membrane. Its function is as follows. Heme chaperone required for the biogenesis of c-type cytochromes. Transiently binds heme delivered by CcmC and transfers the heme to apo-cytochromes in a process facilitated by CcmF and CcmH. The polypeptide is Cytochrome c-type biogenesis protein CcmE (Serratia proteamaculans (strain 568)).